We begin with the raw amino-acid sequence, 633 residues long: Threonine--tRNA ligase (633 aa).

Residues Met1 to Thr61 enclose the TGS domain. A catalytic region spans residues Asp242 to Pro533. The Zn(2+) site is built by Cys333, His384, and His510.

It belongs to the class-II aminoacyl-tRNA synthetase family. Homodimer. Requires Zn(2+) as cofactor.

It is found in the cytoplasm. It carries out the reaction tRNA(Thr) + L-threonine + ATP = L-threonyl-tRNA(Thr) + AMP + diphosphate + H(+). Functionally, catalyzes the attachment of threonine to tRNA(Thr) in a two-step reaction: L-threonine is first activated by ATP to form Thr-AMP and then transferred to the acceptor end of tRNA(Thr). Also edits incorrectly charged L-seryl-tRNA(Thr). The chain is Threonine--tRNA ligase from Laribacter hongkongensis (strain HLHK9).